Consider the following 87-residue polypeptide: CRISPR-associated endoribonuclease Cas2 (87 aa).

Asp-8 contacts Mg(2+).

It belongs to the CRISPR-associated endoribonuclease Cas2 protein family. Homodimer, forms a heterotetramer with a Cas1 homodimer. Mg(2+) is required as a cofactor.

Its function is as follows. CRISPR (clustered regularly interspaced short palindromic repeat), is an adaptive immune system that provides protection against mobile genetic elements (viruses, transposable elements and conjugative plasmids). CRISPR clusters contain sequences complementary to antecedent mobile elements and target invading nucleic acids. CRISPR clusters are transcribed and processed into CRISPR RNA (crRNA). Functions as a ssRNA-specific endoribonuclease. Involved in the integration of spacer DNA into the CRISPR cassette. This chain is CRISPR-associated endoribonuclease Cas2, found in Dictyoglomus turgidum (strain DSM 6724 / Z-1310).